Consider the following 276-residue polypeptide: Diaminopimelate epimerase (276 aa).

Residues asparagine 13, glutamine 46, and asparagine 66 each coordinate substrate. Cysteine 75 (proton donor) is an active-site residue. Substrate is bound by residues 76-77 (GN), asparagine 159, asparagine 192, and 210-211 (ER). Cysteine 219 serves as the catalytic Proton acceptor. 220 to 221 (GS) is a substrate binding site.

This sequence belongs to the diaminopimelate epimerase family. Homodimer.

Its subcellular location is the cytoplasm. The catalysed reaction is (2S,6S)-2,6-diaminopimelate = meso-2,6-diaminopimelate. It functions in the pathway amino-acid biosynthesis; L-lysine biosynthesis via DAP pathway; DL-2,6-diaminopimelate from LL-2,6-diaminopimelate: step 1/1. Catalyzes the stereoinversion of LL-2,6-diaminopimelate (L,L-DAP) to meso-diaminopimelate (meso-DAP), a precursor of L-lysine and an essential component of the bacterial peptidoglycan. This chain is Diaminopimelate epimerase, found in Colwellia psychrerythraea (strain 34H / ATCC BAA-681) (Vibrio psychroerythus).